Reading from the N-terminus, the 331-residue chain is Gamma-parvin (331 aa).

An N-acetylmethionine modification is found at methionine 1. Positions 18–38 (QPTEEELPRGGKKKYLSPNSK) are disordered. 2 Calponin-homology (CH) domains span residues 44–151 (EELQ…KRFQ) and 210–317 (HAVQ…QKHS).

The protein belongs to the parvin family. In terms of assembly, interacts with ILK; the interaction promotes the establishment of cell polarity required for leukocyte migration. Interacts with ARHGEF6; the guanine nucleotide exchange factor activity of ARHGEF6 is essential for the PARVG-induced enhancement of cell spreading. Expressed strongly in spleen and testis, moderately in lung and weakly in brain and heart.

It is found in the cell junction. Its subcellular location is the focal adhesion. The protein resides in the cell membrane. The protein localises to the cytoplasm. It localises to the cytoskeleton. Plays a role with ILK in promoting the cell adhesion and spreading of leukocytes. The polypeptide is Gamma-parvin (Parvg) (Mus musculus (Mouse)).